A 96-amino-acid polypeptide reads, in one-letter code: Small ribosomal subunit protein bS6 (96 aa).

Belongs to the bacterial ribosomal protein bS6 family.

Functionally, binds together with bS18 to 16S ribosomal RNA. The protein is Small ribosomal subunit protein bS6 of Streptococcus thermophilus (strain ATCC BAA-491 / LMD-9).